The following is a 364-amino-acid chain: 3-dehydroquinate synthase (364 aa).

NAD(+)-binding positions include 105–109 (GVVGD), 129–130 (TT), Lys142, and Lys151. 3 residues coordinate Zn(2+): Glu184, His247, and His264.

It belongs to the sugar phosphate cyclases superfamily. Dehydroquinate synthase family. Co(2+) is required as a cofactor. Zn(2+) serves as cofactor. The cofactor is NAD(+).

The protein localises to the cytoplasm. It catalyses the reaction 7-phospho-2-dehydro-3-deoxy-D-arabino-heptonate = 3-dehydroquinate + phosphate. Its pathway is metabolic intermediate biosynthesis; chorismate biosynthesis; chorismate from D-erythrose 4-phosphate and phosphoenolpyruvate: step 2/7. Catalyzes the conversion of 3-deoxy-D-arabino-heptulosonate 7-phosphate (DAHP) to dehydroquinate (DHQ). The chain is 3-dehydroquinate synthase from Acidithiobacillus ferrooxidans (strain ATCC 23270 / DSM 14882 / CIP 104768 / NCIMB 8455) (Ferrobacillus ferrooxidans (strain ATCC 23270)).